Reading from the N-terminus, the 213-residue chain is Ribonuclease HII (213 aa).

Residues 18–213 (GLHAGVDEVG…RPVKERLAKR (196 aa)) enclose the RNase H type-2 domain. Residues Asp-24, Glu-25, and Asp-116 each contribute to the a divalent metal cation site.

Belongs to the RNase HII family. Requires Mn(2+) as cofactor. It depends on Mg(2+) as a cofactor.

The protein resides in the cytoplasm. The catalysed reaction is Endonucleolytic cleavage to 5'-phosphomonoester.. In terms of biological role, endonuclease that specifically degrades the RNA of RNA-DNA hybrids. The sequence is that of Ribonuclease HII from Shewanella woodyi (strain ATCC 51908 / MS32).